Consider the following 218-residue polypeptide: MRLTWPGHACVLLEGSQRVLIDPYVLNGTIPKDPDLVVLTHGHFDHFGETLTLDAPTVAVNDLAKALSALGMQATGLNFGGSITINGVTVSLTPAVHSVSMLELDGTKIMCGEAAGVVIRMDGVTVYHAGDTALFSDMRLIGELYHPDVALLPIGGRFTMDSAAAMMAAAYIGAPMVIPIHYNTWPAIEQDADAFKEAIERTTDMQVMVLPSGGSIEI.

The protein belongs to the UPF0173 family.

The chain is UPF0173 metal-dependent hydrolase Mpal_1063 from Methanosphaerula palustris (strain ATCC BAA-1556 / DSM 19958 / E1-9c).